A 222-amino-acid polypeptide reads, in one-letter code: Thiol:disulfide interchange protein DsbL (222 aa).

The first 27 residues, 1 to 27, serve as a signal peptide directing secretion; sequence MSKLGISSLFKTILLTAALAVSFTASA. The Thioredoxin domain maps to 28-221; the sequence is FTEGTDYMVL…MADLIRELAS (194 aa). Residues Cys56 and Cys59 are joined by a disulfide bond.

Belongs to the thioredoxin family. DsbL subfamily. Interacts with DsbI.

It localises to the periplasm. Involved in disulfide-bond formation. Acts by transferring its disulfide bond to other proteins. Part of a redox system composed of DsbI and DsbL that mediates formation of an essential disulfide bond in AssT. The sequence is that of Thiol:disulfide interchange protein DsbL from Escherichia coli O6:H1 (strain CFT073 / ATCC 700928 / UPEC).